The sequence spans 130 residues: Large ribosomal subunit protein eL22 (130 aa).

Residues 1 to 21 are disordered; sequence MPGKTAQKGGRPSGKGKKKKQ. A Nuclear localization signal motif is present at residues 17 to 20; the sequence is KKKK.

The protein belongs to the eukaryotic ribosomal protein eL22 family.

This chain is Large ribosomal subunit protein eL22 (RPL22), found in Tripneustes gratilla (Hawaian sea urchin).